We begin with the raw amino-acid sequence, 487 residues long: 2-aminomuconic semialdehyde dehydrogenase (487 aa).

NAD(+) is bound at residue 231 to 236 (GSTATA). The Proton acceptor role is filled by Glu-253. The Nucleophile role is filled by Cys-287.

This sequence belongs to the aldehyde dehydrogenase family.

It localises to the cytoplasm. It catalyses the reaction 2-aminomuconate 6-semialdehyde + NAD(+) + H2O = (2Z,4E)-2-aminomuconate + NADH + 2 H(+). The protein operates within amino-acid degradation; L-kynurenine degradation. Catalyzes the NAD-dependent oxidation of 2-aminomuconic semialdehyde of the kynurenine metabolic pathway in L-tryptophan degradation. In Danio rerio (Zebrafish), this protein is 2-aminomuconic semialdehyde dehydrogenase (aldh8a1).